A 1158-amino-acid chain; its full sequence is MTLHAYLGRAGTGKSTKMLTEIKQKMKADPLGDPIILIAPTQSTFQLEQAFVNDPELNGSLRTEVLHFERLSHRIFQEVGSYSEQKLSKAATEMMIYNIVQEQQKYLKLYQSQAKYYGFSEKLTEQIQDFKKYAVTPEHLEHFIADKNMQTRTKNKLEDIALIYREFEQRIQNEFITGEDSLQYFIDCMPKSEWLKRADIYIDGFHNFSTIEYLIIKGLIKYAKSVTIILTTDGNHDQFSLFRKPSEVLRHIEEIANELNISIERQYFNQLYRFNNQDLKHLEQEFDALQINRVACQGHINILESATMREEINEIARRIIVDIRDKQLRYQDIAILYRDESYAYLFDSILPLYNIPYNIDTKRSMTHHPVMEMIRSLIEVIQSNWQVNPMLRLLKTDVLTASYLKSAYLVDLLENFVLERGIYGKRWLDDELFNVEHFSKMGRKGHKLTEDERNTFEQVVKLKKDVIDKILHFEKQMSQAETVKDFATAFYESMEYFELPNQLMTERDELDLNGNHEKAEEIDQIWNGLIQILDDLVLVFGDEPMSMERFLEVFDIGLEQLEFVMIPQTLDQVSIGTMDLAKVDNKQHVYLVGMNDGTMPQPVTASSLITDEEKKYFEQQANVELSPTSDILQMDEAFVCYVAMTRAKGDVTFSYSLMGSSGDDKEISPFLNQIQSLFNQLEITNIPQYHEVNPLSLMQHAKQTKITLFEALRAWLYDEIVADSWLDAYQVIRDSDHLNQGLDYLMSALTFDNETVKLGETLSKDLYGKEINASVSRFEGYQQCPFKHYASHGLKLNERTKYELQNFDLGDIFHSVLKYISERINGDFKQLDLKKIRQLTNEALEEILPKVQFNLLNSSAYYRYLSRRIGAIVETTLSALKYQGTYSKFMPKHFETSFRRKPRTNDELIAQTLTTTQGIPINIRGQIDRIDTYTKNDTSFVNIIDYKSSEGSATLDLTKVYYGMQMQMMTYMDIVLQNKQRLGLTDIVKPGGLLYFHVHEPRIKFKSWSDIDEDKLEQDLIKKFKLSGLVNADQTVIDALDIRLEPKFTSDIVPVGLNKDGSLSKRGSQVADEATIYKFIQHNKENFIETASNIMDGHTEVAPLKYKQKLPCAFCSYQSVCHVDGMIDSKRYRTVDETINPIEAIQNININDEFGGEQ.

The UvrD-like helicase ATP-binding domain occupies 1–275; the sequence is MTLHAYLGRA…QYFNQLYRFN (275 aa). 8 to 15 is an ATP binding site; it reads GRAGTGKS. The UvrD-like helicase C-terminal domain occupies 269 to 583; the sequence is NQLYRFNNQD…SIGTMDLAKV (315 aa). Residues cysteine 784, cysteine 1112, cysteine 1115, and cysteine 1121 each contribute to the [4Fe-4S] cluster site.

Belongs to the helicase family. AddB/RexB type 1 subfamily. In terms of assembly, heterodimer of AddA and AddB. It depends on Mg(2+) as a cofactor. [4Fe-4S] cluster serves as cofactor.

The heterodimer acts as both an ATP-dependent DNA helicase and an ATP-dependent, dual-direction single-stranded exonuclease. Recognizes the chi site generating a DNA molecule suitable for the initiation of homologous recombination. The AddB subunit has 5' -&gt; 3' nuclease activity but not helicase activity. This Staphylococcus aureus (strain COL) protein is ATP-dependent helicase/deoxyribonuclease subunit B.